Consider the following 528-residue polypeptide: Calcium-dependent protein kinase 17 (528 aa).

The disordered stretch occupies residues 1 to 65; it reads MGNCCSHGRD…GPIGPVLGRP (65 aa). Residue G2 is the site of N-myristoyl glycine attachment. The span at 20–45 shows a compositional bias: low complexity; it reads NGASASNAANSTGPTAEASVPQSKHA. A Protein kinase domain is found at 73-331; it reads YSLGKELGRG…AAQVLNHPWI (259 aa). Residues 79–87 and K102 contribute to the ATP site; that span reads LGRGQFGVT. The Proton acceptor role is filled by D197. S237 is subject to Phosphoserine. An autoinhibitory domain region spans residues 337–367; that stretch reads APDVPLDNAVMSRLKQFKAMNNFKKVALRVI. 4 consecutive EF-hand domains span residues 374-409, 410-445, 446-481, and 485-516; these read EEIMGLKEMFKGMDTDSSGTITLEELRQGLAKQGTR, LSEYEVQQLMEAADADGNGTIDYGEFIAATMHINRL, DREEHLYSAFQHFDKDNSGYITMEELEQALREFGMN, and DIKEIISEVDGDNDGRINYDEFVAMMRKGNPD. Residues D387, D389, S391, T393, E398, D423, D425, N427, T429, E434, D459, D461, S463, Y465, E470, D494, D496, D498, R500, and E505 each contribute to the Ca(2+) site.

The protein belongs to the protein kinase superfamily. Ser/Thr protein kinase family. CDPK subfamily.

It localises to the membrane. It catalyses the reaction L-seryl-[protein] + ATP = O-phospho-L-seryl-[protein] + ADP + H(+). The enzyme catalyses L-threonyl-[protein] + ATP = O-phospho-L-threonyl-[protein] + ADP + H(+). Activated by calcium. Autophosphorylation may play an important role in the regulation of the kinase activity. In terms of biological role, may play a role in signal transduction pathways that involve calcium as a second messenger. In Arabidopsis thaliana (Mouse-ear cress), this protein is Calcium-dependent protein kinase 17 (CPK17).